We begin with the raw amino-acid sequence, 257 residues long: MLAKRIIPCLDVRDGQVVKGVQFRNHEIIGDIVPLAERYAKEGADELVFYDITASSDGRVVDKSWVSRVAEVIDIPFCVAGGIRSVEDAGKILSFGADKISINSPALSDPTLISRLADRYGVQCVVVGIDTWFDEKTGEYLVYQFTGDEKRTQQTPWKTLDWVQEVQQRGAGEIVLNMMNQDGVRQGYDLKQLALVRQVTQVPMIASGGAGEMSHFLDAFKLANVDGALAASVFHKQIININELKQYLAENGVKVRI.

Catalysis depends on residues Asp11 and Asp130.

Belongs to the HisA/HisF family. In terms of assembly, heterodimer of HisH and HisF.

The protein resides in the cytoplasm. It carries out the reaction 5-[(5-phospho-1-deoxy-D-ribulos-1-ylimino)methylamino]-1-(5-phospho-beta-D-ribosyl)imidazole-4-carboxamide + L-glutamine = D-erythro-1-(imidazol-4-yl)glycerol 3-phosphate + 5-amino-1-(5-phospho-beta-D-ribosyl)imidazole-4-carboxamide + L-glutamate + H(+). It participates in amino-acid biosynthesis; L-histidine biosynthesis; L-histidine from 5-phospho-alpha-D-ribose 1-diphosphate: step 5/9. In terms of biological role, IGPS catalyzes the conversion of PRFAR and glutamine to IGP, AICAR and glutamate. The HisF subunit catalyzes the cyclization activity that produces IGP and AICAR from PRFAR using the ammonia provided by the HisH subunit. This is Imidazole glycerol phosphate synthase subunit HisF from Proteus mirabilis (strain HI4320).